Reading from the N-terminus, the 116-residue chain is Vesicle-associated membrane protein 2 (116 aa).

Positions 1-28 are disordered; it reads MSATAATVPPAAPAGEGGPPAPPPNLTS. Serine 2 is subject to N-acetylserine. Topologically, residues 2–94 are cytoplasmic; that stretch reads SATAATVPPA…KRKYWWKNLK (93 aa). Residues 31 to 91 enclose the v-SNARE coiled-coil homology domain; that stretch reads RLQQTQAQVD…AKLKRKYWWK (61 aa). A required for interaction with SEPT8 region spans residues 92 to 116; it reads NLKMMIILGVICAIILIIIIVYFST. A helical; Anchor for type IV membrane protein membrane pass occupies residues 95–114; it reads MMIILGVICAIILIIIIVYF. Residues 115 to 116 lie on the Vesicular side of the membrane; that stretch reads ST.

This sequence belongs to the synaptobrevin family. In terms of assembly, part of the SNARE core complex containing SNAP25, VAMP2 and STX1A; this complex constitutes the basic catalytic machinery of the complex neurotransmitter release apparatus. Recruited to the SNARE complex following binding of the SNARE complex component STX1A to STXBP1. This complex binds to CPLX1. Interacts with VAPA and VAPB. Interacts (via N-terminus) with KCNB1 (via N-terminus and C-terminus); stimulates the channel inactivation rate of KCNB1. Interacts with POPDC1 and STX4. Interacts with WDFY2, PRKCZ and PRKCI. Forms a complex with WDFY2 and PRKCZ. Interacts with SEPT8; the interaction inhibits interaction of VAMP2 with SYP. Interacts with SYP; the interaction is inhibited by interaction with SEPT8. Interacts with PICALM. Interacts with alpha-synuclein/SNCA. Interacts with STX3 isoform 3B. Post-translationally, phosphorylated by PRKCZ in vitro and this phosphorylation is increased in the presence of WDFY2. (Microbial infection) Targeted and hydrolyzed by C.botulinum neurotoxin type B (BoNT/B, botB); 20 hours after treatment of spinal cord cells almost all the protein has been digested. BoNT/B hydrolyzes the 76-Gln-|-Phe-77 bond and inhibits neurotransmitter release. In terms of processing, (Microbial infection) Targeted and hydrolyzed by C.tetani toxin (tetX); 20 hours after treatment of spinal cord cells almost all the protein has been digested. Tetanus toxin hydrolyzes the 76-Gln-|-Phe-77 bond and inhibits neurotransmitter release. In terms of tissue distribution, expressed in the outer plexiform layer of the retina (at protein level).

The protein resides in the cytoplasmic vesicle. The protein localises to the secretory vesicle. Its subcellular location is the synaptic vesicle membrane. It localises to the cell membrane. In terms of biological role, involved in the targeting and/or fusion of transport vesicles to their target membrane. Major SNARE protein of synaptic vesicles which mediates fusion of synaptic vesicles to release neurotransmitters. Essential for fast vesicular exocytosis and activity-dependent neurotransmitter release as well as fast endocytosis that mediates rapid reuse of synaptic vesicles. Modulates the gating characteristics of the delayed rectifier voltage-dependent potassium channel KCNB1. The protein is Vesicle-associated membrane protein 2 (Vamp2) of Mus musculus (Mouse).